We begin with the raw amino-acid sequence, 124 residues long: Large ribosomal subunit protein uL22 (124 aa).

The protein belongs to the universal ribosomal protein uL22 family. Part of the 50S ribosomal subunit.

Its function is as follows. This protein binds specifically to 23S rRNA; its binding is stimulated by other ribosomal proteins, e.g. L4, L17, and L20. It is important during the early stages of 50S assembly. It makes multiple contacts with different domains of the 23S rRNA in the assembled 50S subunit and ribosome. The globular domain of the protein is located near the polypeptide exit tunnel on the outside of the subunit, while an extended beta-hairpin is found that lines the wall of the exit tunnel in the center of the 70S ribosome. This chain is Large ribosomal subunit protein uL22, found in Buchnera aphidicola subsp. Cinara cedri (strain Cc).